Reading from the N-terminus, the 524-residue chain is Bifunctional NAD(P)H-hydrate repair enzyme Nnr (524 aa).

An NAD(P)H-hydrate epimerase region spans residues 1–223 (MAVTSPWFRA…QAIANVLGEV (223 aa)). The 201-residue stretch at 17-217 (MQEIENWLFT…GIGLPPQAIA (201 aa)) folds into the YjeF N-terminal domain. The interval 66 to 70 (HNGGD) is NADPHX 1; for epimerase activity. 2 residues coordinate K(+): Asn67 and Asp127. The segment at 131–137 (GVGLTRL) is NADPHX 1; for epimerase activity. Residue Asp160 participates in (6S)-NADPHX binding. Ser163 is a K(+) binding site. The 278-residue stretch at 231–508 (ADQAQQTLPL…EYLIPACRQW (278 aa)) folds into the YjeF C-terminal domain. An ADP-dependent (S)-NAD(P)H-hydrate dehydratase region spans residues 231–524 (ADQAQQTLPL…NWPANLSHSS (294 aa)). Gly333 provides a ligand contact to (6S)-NADPHX. The interval 383–389 (HGGEFKR) is NADPHX 2; for dehydratase activity. Residues 417 to 421 (KGAKT) and 437 to 446 (TPALARGGSG) each bind ADP. Asp447 is a (6S)-NADPHX binding site.

It in the N-terminal section; belongs to the NnrE/AIBP family. The protein in the C-terminal section; belongs to the NnrD/CARKD family. It depends on K(+) as a cofactor.

It catalyses the reaction (6S)-NADHX + ADP = AMP + phosphate + NADH + H(+). The catalysed reaction is (6S)-NADPHX + ADP = AMP + phosphate + NADPH + H(+). It carries out the reaction (6R)-NADHX = (6S)-NADHX. The enzyme catalyses (6R)-NADPHX = (6S)-NADPHX. Its function is as follows. Bifunctional enzyme that catalyzes the epimerization of the S- and R-forms of NAD(P)HX and the dehydration of the S-form of NAD(P)HX at the expense of ADP, which is converted to AMP. This allows the repair of both epimers of NAD(P)HX, a damaged form of NAD(P)H that is a result of enzymatic or heat-dependent hydration. The polypeptide is Bifunctional NAD(P)H-hydrate repair enzyme Nnr (nnr) (Synechocystis sp. (strain ATCC 27184 / PCC 6803 / Kazusa)).